A 328-amino-acid polypeptide reads, in one-letter code: Small ribosomal subunit protein bS1A (328 aa).

S1 motif domains are found at residues 31-100, 118-182, and 196-264; these read GDIV…LSIR, DATV…LSHR, and AQVV…LSTK. Residues 298 to 328 are disordered; the sequence is EAQGIPYEPPTSVDDTDDEEDESLAVSAVDE. A compositionally biased stretch (acidic residues) spans 311-328; the sequence is DDTDDEEDESLAVSAVDE.

The protein belongs to the bacterial ribosomal protein bS1 family.

In terms of biological role, binds mRNA. The polypeptide is Small ribosomal subunit protein bS1A (rps1A) (Synechocystis sp. (strain ATCC 27184 / PCC 6803 / Kazusa)).